Here is a 325-residue protein sequence, read N- to C-terminus: Tetraacyldisaccharide 4'-kinase (325 aa).

55-62 is an ATP binding site; the sequence is TAGGNGKT.

The protein belongs to the LpxK family.

The enzyme catalyses a lipid A disaccharide + ATP = a lipid IVA + ADP + H(+). It functions in the pathway glycolipid biosynthesis; lipid IV(A) biosynthesis; lipid IV(A) from (3R)-3-hydroxytetradecanoyl-[acyl-carrier-protein] and UDP-N-acetyl-alpha-D-glucosamine: step 6/6. Functionally, transfers the gamma-phosphate of ATP to the 4'-position of a tetraacyldisaccharide 1-phosphate intermediate (termed DS-1-P) to form tetraacyldisaccharide 1,4'-bis-phosphate (lipid IVA). The polypeptide is Tetraacyldisaccharide 4'-kinase (Cronobacter sakazakii (strain ATCC BAA-894) (Enterobacter sakazakii)).